The primary structure comprises 711 residues: T-box transcription factor TBX2 (711 aa).

The T-box DNA-binding region spans Leu-109 to Asp-287. The segment at Pro-313 to Pro-449 is disordered. Pro residues predominate over residues Asp-326–Ala-340. 3 positions are modified to phosphoserine: Ser-336, Ser-342, and Ser-360. Basic and acidic residues-rich tracts occupy residues Glu-363–Ser-372, Thr-390–Thr-409, and Ser-421–Glu-444. The segment at Gly-518–Ala-602 is repression domain 1 (RD1). Phosphoserine occurs at positions 623, 652, 656, and 675. The interval Thr-640–Leu-687 is disordered.

As to quaternary structure, binds DNA as a monomer. Interacts with CHD4, HDAC1 and HDAC2, perhaps as components of a NuRD-like complex. Interacts with CBX3, HMGB2 and PBX1. Interacts with PML. Post-translationally, phosphorylated. May be phosphorylated by p38 MAPK in response to UV irradiation stress. As to expression, in adults, highest levels in lung. Also found in heart, kidney, and ovary.

The protein resides in the nucleus. Transcription factor which acts as a transcriptional repressor. May also function as a transcriptional activator. Binds to the palindromic T site 5'-TTCACACCTAGGTGTGAA-3' DNA sequence, or a half-site, which are present in the regulatory region of several genes. Required for cardiac atrioventricular canal formation. May cooperate with NKX2.5 to negatively modulate expression of NPPA/ANF in the atrioventricular canal. May play a role as a positive regulator of TGFB2 expression, perhaps acting in concert with GATA4 in the developing outflow tract myocardium. Plays a role in limb pattern formation. Acts as a transcriptional repressor of ADAM10 gene expression, perhaps in concert with histone deacetylase HDAC1 as cofactor. Involved in branching morphogenesis in both developing lungs and adult mammary glands, via negative modulation of target genes; acting redundantly with TBX3. Required, together with TBX3, to maintain cell proliferation in the embryonic lung mesenchyme; perhaps acting downstream of SHH, BMP and TGFbeta signaling. Involved in modulating early inner ear development, acting independently of, and also redundantly with TBX3, in different subregions of the developing ear. Acts as a negative regulator of PML function in cellular senescence. Acts as a negative regulator of expression of CDKN1A/p21, IL33 and CCN4; repression of CDKN1A is enhanced in response to UV-induced stress, perhaps as a result of phosphorylation by p38 MAPK. Negatively modulates expression of CDKN2A/p19ARF and CDH1/E-cadherin. Plays a role in induction of the epithelial-mesenchymal transition (EMT). Plays a role in melanocyte proliferation, perhaps via regulation of cyclin CCND1. Involved in melanogenesis, acting via negative modulation of expression of DHICA oxidase/TYRP1 and P protein/OCA2. Involved in regulating retinal pigment epithelium (RPE) cell proliferation, perhaps via negatively modulating transcription of the transcription factor CEBPD. This is T-box transcription factor TBX2 (Tbx2) from Mus musculus (Mouse).